The following is a 148-amino-acid chain: Large ribosomal subunit protein bL27m (148 aa).

A mitochondrion-targeting transit peptide spans 1–30 (MAAAALTLRTRAAVTALLSPTAPTALAVRH). The tract at residues 28 to 48 (VRHASKKTGGSSKNLGGKSRG) is disordered.

The protein belongs to the bacterial ribosomal protein bL27 family. As to quaternary structure, component of the mitochondrial ribosome large subunit (39S) which comprises a 16S rRNA and about 50 distinct proteins.

It is found in the mitochondrion. This Mus musculus (Mouse) protein is Large ribosomal subunit protein bL27m (Mrpl27).